The primary structure comprises 159 residues: NADH-quinone oxidoreductase subunit B (159 aa).

[4Fe-4S] cluster contacts are provided by Cys36, Cys37, Cys102, and Cys132.

It belongs to the complex I 20 kDa subunit family. NDH-1 is composed of 14 different subunits. Subunits NuoB, C, D, E, F, and G constitute the peripheral sector of the complex. [4Fe-4S] cluster serves as cofactor.

It localises to the cell inner membrane. The enzyme catalyses a quinone + NADH + 5 H(+)(in) = a quinol + NAD(+) + 4 H(+)(out). NDH-1 shuttles electrons from NADH, via FMN and iron-sulfur (Fe-S) centers, to quinones in the respiratory chain. Couples the redox reaction to proton translocation (for every two electrons transferred, four hydrogen ions are translocated across the cytoplasmic membrane), and thus conserves the redox energy in a proton gradient. This chain is NADH-quinone oxidoreductase subunit B, found in Paracidovorax citrulli (strain AAC00-1) (Acidovorax citrulli).